A 206-amino-acid polypeptide reads, in one-letter code: Ras-related protein Ral-A (206 aa).

21–28 (GSGGVGKS) contacts GTP. The short motif at 43–51 (YEPTKADSY) is the Effector region element. GTP contacts are provided by residues 68 to 72 (DTAGQ) and 127 to 130 (NKSD). S194 carries the post-translational modification Phosphoserine. At C203 the chain carries Cysteine methyl ester. Residue C203 is the site of S-geranylgeranyl cysteine attachment. The propeptide at 204-206 (CIL) is removed in mature form.

Belongs to the small GTPase superfamily. Ras family. In terms of assembly, interacts (via effector domain) with RALBP1; during mitosis, recruits RALBP1 to the mitochondrion where it promotes DNM1L phosphorylation and mitochondrial fission. Interacts with EXOC2/Sec5 and EXOC8/Exo84; binding to EXOC2 and EXOC8 is mutually exclusive. Interacts with Clostridium exoenzyme C3. Interacts with RALGPS1. Interacts with LPAR1 and LPAR2. Interacts with GRK2 in response to LPAR1 activation. RALA and GRK2 binding to LPAR1 is mutually exclusive. Interacts with CDC42. Prenylation is essential for membrane localization. In terms of processing, phosphorylated. Phosphorylation at Ser-194 by AURKA/Aurora kinase A, during mitosis, induces RALA localization to the mitochondrion where it regulates mitochondrial fission.

Its subcellular location is the cell membrane. The protein resides in the cleavage furrow. It is found in the midbody. It localises to the midbody ring. The protein localises to the mitochondrion. The catalysed reaction is GTP + H2O = GDP + phosphate + H(+). Its activity is regulated as follows. Alternates between an inactive form bound to GDP and an active form bound to GTP. Activated by a guanine nucleotide-exchange factor (GEF) and inactivated by a GTPase-activating protein (GAP). In terms of biological role, multifunctional GTPase involved in a variety of cellular processes including gene expression, cell migration, cell proliferation, oncogenic transformation and membrane trafficking. Accomplishes its multiple functions by interacting with distinct downstream effectors. Acts as a GTP sensor for GTP-dependent exocytosis of dense core vesicles. Key regulator of LPAR1 signaling and competes with GRK2 for binding to LPAR1 thus affecting the signaling properties of the receptor. Required for anchorage-independent proliferation of transformed cells. The RALA-exocyst complex regulates integrin-dependent membrane raft exocytosis and growth signaling. During mitosis, supports the stabilization and elongation of the intracellular bridge between dividing cells. Cooperates with EXOC2 to recruit other components of the exocyst to the early midbody. During mitosis, also controls mitochondrial fission by recruiting to the mitochondrion RALBP1, which mediates the phosphorylation and activation of DNM1L by the mitotic kinase cyclin B-CDK1. This is Ras-related protein Ral-A (Rala) from Mus musculus (Mouse).